The following is a 599-amino-acid chain: MADKGTDNFDLEGNNWYIVHEAECTDSIDTLDDLCDESNDDSNISNLIDDDVVDQGNSLALYNAQINEDCDNALAHLKRKYNKSPEQAVAELSPQLQAVKITPERHSKRRLFQDSGIFEDEAENSLTQVESESQAGPSSQDGGGDINLLLLQSSNRRATMLAKFKEWYGVSYNEITRIYKSDKSCSDNWVIVIFRAAVEVLESSKIVLKQHCTYIQVKIFGFSALYLVQFKSAKSRETVQKLMCSILNIQEYQMLCDPPKLRSVPTALYFYKHAMLTESSVFGQTPDWIAKQTLVSHQAATTAETFELSRMVQWAYDNNYVDECDIAYHYAMYAEEDANAAAYLKSNNQVKHVRDCSTMVRMYKRYEMRDMSMSEWIYKCCDECSEEGDWKPISQFLKYQGVNILSFLIVLKSFLKGIPKKNCIVIHGPPDTGKSLFCYSFIKFLKGKVVSYVNRSSHFWLQPLMDCKVGFMDDATYVCWTYIDQNLRNALDGNPMCIDAKHRAPQQLKLPPMLITSNIDIKQEQSLMYLHSRIQCFNFPNKMPILDDGSPMYTFTDGTWKSFFQKLGRQLELTDPEEENNGVPSRTFRCTSRSNSDSY.

The Nuclear localization signal motif lies at 78–80 (KRK). A phosphoserine; by host mark is found at serine 84 and serine 93. A Nuclear export signal motif is present at residues 92–101 (LSPQLQAVKI). The segment covering 124 to 140 (NSLTQVESESQAGPSSQ) has biased composition (polar residues). The tract at residues 124–144 (NSLTQVESESQAGPSSQDGGG) is disordered. The tract at residues 139–303 (SQDGGGDINL…LVSHQAATTA (165 aa)) is DNA-binding region. An SF3 helicase domain is found at 402-552 (VNILSFLIVL…MPILDDGSPM (151 aa)). 428–435 (GPPDTGKS) provides a ligand contact to ATP. Residue lysine 509 forms a Glycyl lysine isopeptide (Lys-Gly) (interchain with G-Cter in SUMO) linkage. Positions 575 to 599 (DPEEENNGVPSRTFRCTSRSNSDSY) are disordered. The span at 582–599 (GVPSRTFRCTSRSNSDSY) shows a compositional bias: polar residues.

This sequence belongs to the papillomaviridae E1 protein family. As to quaternary structure, can form hexamers. Interacts with E2 protein; this interaction increases E1 DNA binding specificity. Interacts with host DNA polymerase subunit POLA2. Interacts with host single stranded DNA-binding protein RPA1. Interacts with host TOP1; this interaction stimulates the enzymatic activity of TOP1. In terms of processing, phosphorylated. Post-translationally, sumoylated.

The protein resides in the host nucleus. It catalyses the reaction Couples ATP hydrolysis with the unwinding of duplex DNA by translocating in the 3'-5' direction.. The enzyme catalyses ATP + H2O = ADP + phosphate + H(+). ATP-dependent DNA 3'-5' helicase required for initiation of viral DNA replication. It forms a complex with the viral E2 protein. The E1-E2 complex binds to the replication origin which contains binding sites for both proteins. During the initial step, a dimer of E1 interacts with a dimer of protein E2 leading to a complex that binds the viral origin of replication with high specificity. Then, a second dimer of E1 displaces the E2 dimer in an ATP-dependent manner to form the E1 tetramer. Following this, two E1 monomers are added to each half of the site, which results in the formation of two E1 trimers on the viral ori. Subsequently, two hexamers will be created. The double hexamer acts as a bi-directional helicase machinery and unwinds the viral DNA and then recruits the host DNA polymerase to start replication. In Homo sapiens (Human), this protein is Replication protein E1.